Here is a 284-residue protein sequence, read N- to C-terminus: RNA polymerase sigma factor RpoH (284 aa).

The tract at residues 54–123 (MVLAHLRFVV…IHEFILRNWR (70 aa)) is sigma-70 factor domain-2. An Interaction with polymerase core subunit RpoC motif is present at residues 78 to 81 (DLIQ). The tract at residues 229–280 (ALEGLDERSRDILQQRWLSEEKATLHDLAEKYNVSAERIRQLEKNAMSKLKG) is sigma-70 factor domain-4. The segment at residues 253 to 272 (LHDLAEKYNVSAERIRQLEK) is a DNA-binding region (H-T-H motif).

It belongs to the sigma-70 factor family. RpoH subfamily. As to quaternary structure, interacts with the RNA polymerase core enzyme.

It localises to the cytoplasm. Functionally, sigma factors are initiation factors that promote the attachment of RNA polymerase to specific initiation sites and are then released. This sigma factor is involved in regulation of expression of heat shock genes. The chain is RNA polymerase sigma factor RpoH from Pseudomonas aeruginosa (strain ATCC 15692 / DSM 22644 / CIP 104116 / JCM 14847 / LMG 12228 / 1C / PRS 101 / PAO1).